The chain runs to 282 residues: Small ribosomal subunit protein uS2 (282 aa).

A disordered region spans residues 260-282 (KRRRSKVYKEEEREVVTNEDESR). The span at 266 to 282 (VYKEEEREVVTNEDESR) shows a compositional bias: basic and acidic residues.

This sequence belongs to the universal ribosomal protein uS2 family.

This is Small ribosomal subunit protein uS2 from Wolbachia pipientis wMel.